A 711-amino-acid polypeptide reads, in one-letter code: Polyribonucleotide nucleotidyltransferase (711 aa).

Mg(2+)-binding residues include aspartate 486 and aspartate 492. One can recognise a KH domain in the interval 553–612; that stretch reads PRIHTIKINPDKIKDVIGKGGSVIRALTEETGTTIEIEDDGTVKIAATDGEKAKHAIRRI. The 69-residue stretch at 622 to 690 folds into the S1 motif domain; it reads GRVYTGKVTR…RQGRIRLSIK (69 aa). The tract at residues 689 to 711 is disordered; the sequence is IKEATEQSQPAAAPEAPAAEQGE. The span at 694 to 711 shows a compositional bias: low complexity; sequence EQSQPAAAPEAPAAEQGE.

This sequence belongs to the polyribonucleotide nucleotidyltransferase family. Component of the RNA degradosome, which is a multiprotein complex involved in RNA processing and mRNA degradation. Requires Mg(2+) as cofactor.

The protein resides in the cytoplasm. It catalyses the reaction RNA(n+1) + phosphate = RNA(n) + a ribonucleoside 5'-diphosphate. Involved in mRNA degradation. Catalyzes the phosphorolysis of single-stranded polyribonucleotides processively in the 3'- to 5'-direction. In Escherichia coli O8 (strain IAI1), this protein is Polyribonucleotide nucleotidyltransferase.